Consider the following 66-residue polypeptide: ATP synthase protein 8 (66 aa).

Residues 8–24 (TWLMMIMSMFLALFIIF) traverse the membrane as a helical segment. Lys54 bears the N6-acetyllysine; alternate mark. The residue at position 54 (Lys54) is an N6-succinyllysine; alternate. An N6-acetyllysine modification is found at Lys57.

The protein belongs to the ATPase protein 8 family. In terms of assembly, F-type ATPases have 2 components, CF(1) - the catalytic core - and CF(0) - the membrane proton channel. Component of an ATP synthase complex composed of ATP5PB, ATP5MC1, ATP5F1E, ATP5PD, ATP5ME, ATP5PF, ATP5MF, MT-ATP6, MT-ATP8, ATP5F1A, ATP5F1B, ATP5F1D, ATP5F1C, ATP5PO, ATP5MG, ATP5MK and ATP5MJ. Interacts with PRICKLE3.

It is found in the mitochondrion membrane. Its function is as follows. Mitochondrial membrane ATP synthase (F(1)F(0) ATP synthase or Complex V) produces ATP from ADP in the presence of a proton gradient across the membrane which is generated by electron transport complexes of the respiratory chain. F-type ATPases consist of two structural domains, F(1) - containing the extramembraneous catalytic core and F(0) - containing the membrane proton channel, linked together by a central stalk and a peripheral stalk. During catalysis, ATP synthesis in the catalytic domain of F(1) is coupled via a rotary mechanism of the central stalk subunits to proton translocation. Part of the complex F(0) domain. Minor subunit located with subunit a in the membrane. In Cervus elaphus hippelaphus (European red deer), this protein is ATP synthase protein 8 (MT-ATP8).